The sequence spans 194 residues: Cysteine and glycine-rich protein 2 (194 aa).

The region spanning 10 to 61 is the LIM zinc-binding 1 domain; the sequence is CGACGRTVYHAEEVQCDGRSFHRCCFLCMVCRKNLDSTTVAIHDAEVYCKSC. Residues 64–69 carry the Nuclear localization signal motif; it reads KKYGPK. Residues 120 to 171 form the LIM zinc-binding 2 domain; it reads CSRCGDSVYAAEKVIGAGKPWHKNCFRCAKCGKSLESTTLTEKEGEIYCKGC.

Its subcellular location is the nucleus. Its function is as follows. Totally down-regulated in transformed cells. May therefore take part in the control of cell growth and differentiation. The sequence is that of Cysteine and glycine-rich protein 2 (CSRP2) from Gallus gallus (Chicken).